A 102-amino-acid polypeptide reads, in one-letter code: MIKSELVDFVAAKNPYLHRRDAENAVDAVLDEITGALERGERVDIRSFGTFVVRHRPARSGRNPLNGNAVFIEEKWVPFFRAGKEIRDRLNTAEKSQGRGNL.

The protein belongs to the bacterial histone-like protein family. In terms of assembly, heterodimer of an alpha and a beta chain.

In terms of biological role, this protein is one of the two subunits of integration host factor, a specific DNA-binding protein that functions in genetic recombination as well as in transcriptional and translational control. This Rhizobium radiobacter (Agrobacterium tumefaciens) protein is Integration host factor subunit beta (ihfB).